Reading from the N-terminus, the 690-residue chain is MKLPIAKRIPHPHELHGDVREDDYYWLKDRDNTEVIQYLEEENRYYHEIMRPLQEQTEQIYESMVDRVPDSEMKVPVQHGQFFYYSRLDKNKQYPIYARKQAASRALLQDATEEVVLDLNELAEEDDYLSVTVQRMTTDHSRLAYLENRDGTDRYTIYIKDLNTGELLSDRVPNVYIYGSMEWCRCGDYIFYTTVDEHQRPCQLWRHRLGSDVESDELIFEEKDDTFTLFISKSQSGKFIFVYSSSKTTSEIHMIDTDSPLSPLQLVDERRDGILYDVEHWEDDLLILTNEGALNFQLLRCPLNDLSSKVNVVEYNEERYLQEMYPFRDKLLIAGRENGLTQIWVVHDGELQQISWDEPLYTVAVLSEQSYDTNEVLIQYESLLTPKTTFGLNLQTGEKQCLQVAPVSGEYDRSQFRQEQLWATGRSGVKVPMTAVYLEGALDNGPAPLILYGYGSYGSNSDPRFDPYRLPLLEKGIVFVTAQVRGGSEMGRGWYEDGKMQNKRNTFTDFIAAAKHLIDQNYTSPTKMAARGGSAGGLLVGAVANMAGELFKVIVPAVPFVDVVTTMLDTSIPLTTLEWDEWGDPRKQEDYFYMKSYSPYDNVEAKDYPHMYITTGINDPRVGYFEPAKWVARLRAVKTDNNTLVMKTNMGAGHFGKSGRFNHLKEAAESYAFILDKLGVEAEEKVLNHR.

Catalysis depends on charge relay system residues Ser534, Asp619, and His654.

It belongs to the peptidase S9A family.

It carries out the reaction Hydrolysis of -Arg-|-Xaa- and -Lys-|-Xaa- bonds in oligopeptides, even when P1' residue is proline.. In terms of biological role, cleaves peptide bonds on the C-terminal side of lysyl and argininyl residues. This chain is Protease 2 (ptrB), found in Moraxella lacunata.